The chain runs to 553 residues: Phenylalanine--tRNA ligase beta subunit (553 aa).

A B5 domain is found at 273-349; sequence FNVRNIDIEV…RAFGYNNITP (77 aa). Residues aspartate 327, aspartate 333, aspartate 336, and aspartate 337 each contribute to the Mg(2+) site.

This sequence belongs to the phenylalanyl-tRNA synthetase beta subunit family. Type 2 subfamily. In terms of assembly, tetramer of two alpha and two beta subunits. Requires Mg(2+) as cofactor.

Its subcellular location is the cytoplasm. It catalyses the reaction tRNA(Phe) + L-phenylalanine + ATP = L-phenylalanyl-tRNA(Phe) + AMP + diphosphate + H(+). The chain is Phenylalanine--tRNA ligase beta subunit from Methanocella arvoryzae (strain DSM 22066 / NBRC 105507 / MRE50).